Here is a 313-residue protein sequence, read N- to C-terminus: Aspartate carbamoyltransferase catalytic subunit (313 aa).

Carbamoyl phosphate contacts are provided by R58 and T59. Position 86 (K86) interacts with L-aspartate. Carbamoyl phosphate-binding residues include R108, H136, and Q139. L-aspartate contacts are provided by R169 and R224. The carbamoyl phosphate site is built by G265 and P266.

The protein belongs to the aspartate/ornithine carbamoyltransferase superfamily. ATCase family. Heterododecamer (2C3:3R2) of six catalytic PyrB chains organized as two trimers (C3), and six regulatory PyrI chains organized as three dimers (R2).

The enzyme catalyses carbamoyl phosphate + L-aspartate = N-carbamoyl-L-aspartate + phosphate + H(+). The protein operates within pyrimidine metabolism; UMP biosynthesis via de novo pathway; (S)-dihydroorotate from bicarbonate: step 2/3. Functionally, catalyzes the condensation of carbamoyl phosphate and aspartate to form carbamoyl aspartate and inorganic phosphate, the committed step in the de novo pyrimidine nucleotide biosynthesis pathway. The sequence is that of Aspartate carbamoyltransferase catalytic subunit from Natranaerobius thermophilus (strain ATCC BAA-1301 / DSM 18059 / JW/NM-WN-LF).